We begin with the raw amino-acid sequence, 388 residues long: Phosphoglycerate kinase (388 aa).

Substrate is bound by residues 21-23, Arg36, 59-62, Arg114, and Arg147; these read DLN and HLGR. ATP-binding positions include Lys198, Glu315, and 341 to 344; that span reads GGDT.

It belongs to the phosphoglycerate kinase family. In terms of assembly, monomer.

It localises to the cytoplasm. It carries out the reaction (2R)-3-phosphoglycerate + ATP = (2R)-3-phospho-glyceroyl phosphate + ADP. The protein operates within carbohydrate degradation; glycolysis; pyruvate from D-glyceraldehyde 3-phosphate: step 2/5. This Buchnera aphidicola subsp. Schizaphis graminum (strain Sg) protein is Phosphoglycerate kinase.